The chain runs to 303 residues: 4-diphosphocytidyl-2-C-methyl-D-erythritol kinase (303 aa).

Lysine 21 is an active-site residue. 106–116 contributes to the ATP binding site; it reads PVAAGIGGGSA. Residue aspartate 148 is part of the active site.

It belongs to the GHMP kinase family. IspE subfamily.

It catalyses the reaction 4-CDP-2-C-methyl-D-erythritol + ATP = 4-CDP-2-C-methyl-D-erythritol 2-phosphate + ADP + H(+). It functions in the pathway isoprenoid biosynthesis; isopentenyl diphosphate biosynthesis via DXP pathway; isopentenyl diphosphate from 1-deoxy-D-xylulose 5-phosphate: step 3/6. Catalyzes the phosphorylation of the position 2 hydroxy group of 4-diphosphocytidyl-2C-methyl-D-erythritol. The polypeptide is 4-diphosphocytidyl-2-C-methyl-D-erythritol kinase (Nitrobacter hamburgensis (strain DSM 10229 / NCIMB 13809 / X14)).